The sequence spans 307 residues: tRNA pseudouridine synthase B (307 aa).

The Nucleophile role is filled by D48.

Belongs to the pseudouridine synthase TruB family. Type 1 subfamily.

It carries out the reaction uridine(55) in tRNA = pseudouridine(55) in tRNA. Functionally, responsible for synthesis of pseudouridine from uracil-55 in the psi GC loop of transfer RNAs. This is tRNA pseudouridine synthase B from Pasteurella multocida (strain Pm70).